The chain runs to 199 residues: Chaperone protein TorD (199 aa).

This sequence belongs to the TorD/DmsD family. TorD subfamily.

The protein localises to the cytoplasm. Involved in the biogenesis of TorA. Acts on TorA before the insertion of the molybdenum cofactor and, as a result, probably favors a conformation of the apoenzyme that is competent for acquiring the cofactor. In Shigella dysenteriae serotype 1 (strain Sd197), this protein is Chaperone protein TorD.